The sequence spans 334 residues: UPF0104 membrane protein MTH_378 (334 aa).

8 helical membrane-spanning segments follow: residues 7-27 (FYFF…MGPS), 33-53 (VYMA…GVLA), 120-140 (FFDL…VPVI), 142-162 (VIAL…YLVN), 218-238 (VIFI…YLVF), 247-267 (FSAV…SALP), 277-297 (MAGL…IALV), and 300-320 (IISF…YAGE).

Belongs to the UPF0104 family.

Its subcellular location is the cell membrane. The chain is UPF0104 membrane protein MTH_378 from Methanothermobacter thermautotrophicus (strain ATCC 29096 / DSM 1053 / JCM 10044 / NBRC 100330 / Delta H) (Methanobacterium thermoautotrophicum).